A 159-amino-acid polypeptide reads, in one-letter code: Ascorbate-specific PTS system EIIA component (159 aa).

The 144-residue stretch at 9–152 (VLKQHHTVRL…TSLFAVIDRV (144 aa)) folds into the PTS EIIA type-2 domain. The active-site Tele-phosphohistidine intermediate is His-71. His-71 is modified (phosphohistidine).

It is found in the cytoplasm. Its function is as follows. The phosphoenolpyruvate-dependent sugar phosphotransferase system (sugar PTS), a major carbohydrate active transport system, catalyzes the phosphorylation of incoming sugar substrates concomitantly with their translocation across the cell membrane. The enzyme II UlaABC PTS system is involved in ascorbate transport. This is Ascorbate-specific PTS system EIIA component (ulaC) from Mycoplasma pneumoniae (strain ATCC 29342 / M129 / Subtype 1) (Mycoplasmoides pneumoniae).